The following is a 344-amino-acid chain: Tetraacyldisaccharide 4'-kinase (344 aa).

Residue 68-75 (TAGGNGKT) participates in ATP binding.

It belongs to the LpxK family.

The enzyme catalyses a lipid A disaccharide + ATP = a lipid IVA + ADP + H(+). It functions in the pathway glycolipid biosynthesis; lipid IV(A) biosynthesis; lipid IV(A) from (3R)-3-hydroxytetradecanoyl-[acyl-carrier-protein] and UDP-N-acetyl-alpha-D-glucosamine: step 6/6. Functionally, transfers the gamma-phosphate of ATP to the 4'-position of a tetraacyldisaccharide 1-phosphate intermediate (termed DS-1-P) to form tetraacyldisaccharide 1,4'-bis-phosphate (lipid IVA). The sequence is that of Tetraacyldisaccharide 4'-kinase from Photobacterium profundum (strain SS9).